The following is a 3015-amino-acid chain: Genome polyprotein (3015 aa).

N-acetylserine; by host is present on S2. The segment at 2–23 (STLPKPQRKTKRNTNRRPMDVK) is interaction with STAT1. The tract at residues 2–58 (STLPKPQRKTKRNTNRRPMDVKFPGGGQIVGGVYLLPRRGPRLGVRATRKTSERSQP) is interaction with EIF2AK2/PKR. An interaction with DDX3X region spans residues 2 to 59 (STLPKPQRKTKRNTNRRPMDVKFPGGGQIVGGVYLLPRRGPRLGVRATRKTSERSQPR). Positions 2 to 75 (STLPKPQRKT…PKARQPIGRS (74 aa)) are disordered. The Cytoplasmic segment spans residues 2-168 (STLPKPQRKT…EDGVNYATGN (167 aa)). 2 consecutive short sequence motifs (nuclear localization signal) follow at residues 5–13 (PKPQRKTKR) and 38–43 (PRRGPR). The segment covering 7–16 (PQRKTKRNTN) has biased composition (basic residues). The segment covering 32-47 (GGVYLLPRRGPRLGVR) has biased composition (low complexity). A Phosphoserine; by host modification is found at S53. 2 consecutive short sequence motifs (nuclear localization signal) follow at residues 58–64 (PRGRRQP) and 66–71 (PKARQP). Residues S99 and S116 each carry the phosphoserine; by host modification. The segment at 112–152 (PRRRSRNLGKVIDTLTCGLADLMGYIPVLGGPLGGVAAALA) is important for endoplasmic reticulum and mitochondrial localization. The tract at residues 122 to 173 (VIDTLTCGLADLMGYIPVLGGPLGGVAAALAHGVRAIEDGVNYATGNLPGCS) is interaction with APOA2. Residues 164 to 167 (YATG) form an important for lipid droplets localization region. Residues 169–189 (LPGCSFSIFLLALLSCLTTPA) traverse the membrane as a helical segment. A propeptide spans 178–191 (LLALLSCLTTPASA) (ER anchor for the core protein, removed in mature form by host signal peptidase). At 190–358 (SAIQVRNASG…TGAHWGVLGA (169 aa)) the chain is on the lumenal side. Residues N196, N209, N234, and N250 are each glycosylated (N-linked (GlcNAc...) asparagine; by host). Residues 265-296 (LVGAAAFCSAMYIGDLCGSVFLVGQLFTFRPK) form an important for fusion region. N305 is a glycosylation site (N-linked (GlcNAc...) asparagine; by host). A helical membrane pass occupies residues 359–379 (LLYFSMVANWAKVIAVLFLFA). Residues 380–726 (GADATTYTGS…WEYVVLAFLV (347 aa)) lie on the Lumenal side of the membrane. Residues 385–411 (TYTGSAVSSTTGAFVSLFSPGPTQNLQ) form an HVR1 region. N416, N422, and N429 each carry an N-linked (GlcNAc...) (high mannose) asparagine; by host glycan. Cystine bridges form between C428/C552, C451/C458, C486/C494, and C503/C508. N-linked (GlcNAc...) asparagine; by host glycosylation occurs at N447. Residues 474 to 478 (VNISG) form an HVR2 region. N-linked (GlcNAc...) asparagine; by host glycosylation is present at N475. The tract at residues 480-493 (SEDKPYCWHYAPRP) is CD81-binding 1. N532 carries N-linked (GlcNAc...) asparagine; by host glycosylation. The interval 544-551 (PPLGAWFG) is CD81-binding 2. N556 carries an N-linked (GlcNAc...) asparagine; by host glycan. Disulfide bonds link C564-C569, C582-C586, C598-C621, and C608-C645. N-linked (GlcNAc...) (high mannose) asparagine; by host glycans are attached at residues N624 and N646. An intrachain disulfide couples C653 to C678. Residues 661–672 (FEMSPLLFSTTQ) form a PKR/eIF2-alpha phosphorylation homology domain (PePHD) region. A helical transmembrane segment spans residues 727 to 747 (LADARVCACLWLMFLVGQAEA). Residues 748-758 (ALENVIVLNAA) lie on the Lumenal side of the membrane. The helical transmembrane segment at 759 to 779 (SAASCQGLLWGLIFICCAWHV) threads the bilayer. The Cytoplasmic portion of the chain corresponds to 780–783 (RGRA). The chain crosses the membrane as a helical span at residues 784–804 (VPVTTYALLQLWPLLLLILAL). The Lumenal segment spans residues 805 to 814 (PRRAYAFDSE). A helical membrane pass occupies residues 815-835 (QAASAGLLVLGLITIFTLTPA). At 836-882 (YKQLLISMLWWIQYFIALTEAQLHQWVPSLLVRGGRDAVILLACLFH) the chain is on the cytoplasmic side. Residues 883-903 (PQLGFEVTKILLALLGPLYLL) traverse the membrane as a helical segment. Residues 904 to 929 (QYSLLKTPYFVRAHILLRACMFFRGM) are Lumenal-facing. In terms of domain architecture, Peptidase C18 spans 904 to 1027 (QYSLLKTPYF…DVKGKGWRLL (124 aa)). Residues 905–1207 (YSLLKTPYFV…PVESMQSSQR (303 aa)) form a protease NS2-3 region. C923 is lipidated: S-palmitoyl cysteine; by host. The helical transmembrane segment at 930-950 (ARGRYAQAILLRIGAWTGTYI) threads the bilayer. The interval 930-950 (ARGRYAQAILLRIGAWTGTYI) is interaction with host SCPS1. Residues 951-1658 (YDHLAPLSDW…CMSADLEVIT (708 aa)) are Cytoplasmic-facing. Residues H953, E973, and C994 each act as for protease NS2 activity; shared with dimeric partner in the active site. The 182-residue stretch at 1028 to 1209 (APITAYAQQT…ESMQSSQRSP (182 aa)) folds into the Peptidase S29 domain. Catalysis depends on D1108, which acts as the Charge relay system; for serine protease NS3 activity. Positions 1124 and 1126 each coordinate Zn(2+). S1166 functions as the Charge relay system; for serine protease NS3 activity in the catalytic mechanism. C1172 and H1176 together coordinate Zn(2+). The Helicase ATP-binding domain maps to 1218–1370 (PAVPQTYQVG…PNITESALPT (153 aa)). Residue 1231 to 1238 (APTGSGKS) participates in ATP binding. Residues S1238 and E1318 each coordinate Mg(2+). The DECH box motif lies at 1317–1320 (DECH). An RNA-binding region spans residues 1487-1499 (QRRGRTGRGKHGV). Residues 1659 to 1679 (STWVLVGGVVAALAAYCLSVG) traverse the membrane as a helical segment. The interval 1680-1691 (CVVICGRISTSG) is NS3-binding. Residues 1680-1806 (CVVICGRIST…SLTSPLSTHQ (127 aa)) lie on the Cytoplasmic side of the membrane. The chain crosses the membrane as a helical span at residues 1807–1827 (TLLLNILGGWVASQLANPTAS). At 1828 to 1829 (TA) the chain is on the lumenal side. Residues 1830–1850 (FVVSGLAGAAVGSIGLGRVIV) form a helical membrane-spanning segment. D1851 is a topological domain (cytoplasmic). A helical transmembrane segment spans residues 1852 to 1872 (VLAGYGAGVSGALVAFKIMCG). Topologically, residues 1873–1882 (ETPSAEDMVN) are lumenal. A helical transmembrane segment spans residues 1883–1903 (LLPALLSPGALVVGVVCAAIL). The Cytoplasmic segment spans residues 1904-1973 (RRHAGPSEGA…WINTDWSTPC (70 aa)). C1973 carries S-palmitoyl cysteine; by host lipidation. Residues 1974 to 2003 (SSSWLRDIWDWVCEVLSDFKTWLKAKLVPA) lie within the membrane without spanning it. Topologically, residues 2004-2994 (LPGVPFLSCQ…YHSASRARPR (991 aa)) are cytoplasmic. Zn(2+) contacts are provided by C2012, C2030, C2032, and C2053. Positions 2121–2209 (EFFTEVDGVR…ASSSASQLSA (89 aa)) are FKBP8-binding. The interval 2121-2334 (EFFTEVDGVR…PIPPPRRKKV (214 aa)) is transcriptional activation. The interval 2136–2140 (PRCKP) is interaction with non-structural protein 4A. The tract at residues 2190–2442 (RLARGSPPSL…ALVTPCAAEE (253 aa)) is interaction with host SKP2. Phosphoserine; by host occurs at positions 2195, 2198, 2202, 2205, 2208, and 2211. The segment at 2211-2250 (SLKATCTMHGAHPDAELIEANLLWRQEMGGNITRVESENK) is ISDR. The segment at 2211–2276 (SLKATCTMHG…REMSVPAECH (66 aa)) is interaction with EIF2AK2/PKR. The NS4B-binding stretch occupies residues 2250–2308 (KVVILDSFDPLVPEFEEREMSVPAECHRPRRPKFPPALPIWATPGYNPPVLETWKSPTY). The V3 stretch occupies residues 2301–2378 (ETWKSPTYEP…PDHSTESSEH (78 aa)). 2 disordered regions span residues 2319–2338 (PPSG…VQLD) and 2352–2413 (KTFE…SWST). Residues 2324 to 2327 (PPIP) carry the SH3-binding motif. The Nuclear localization signal signature appears at 2329 to 2337 (PRRKKVVQL). K2352 is covalently cross-linked (Glycyl lysine isopeptide (Lys-Gly) (interchain with G-Cter in ubiquitin)). Over residues 2355 to 2365 (ETPSSPTTGYG) the composition is skewed to polar residues. A compositionally biased stretch (basic and acidic residues) spans 2368-2383 (QPDHSTESSEHDRDDG). Phosphoserine; by host is present on residues S2453 and S2466. One can recognise a RdRp catalytic domain in the interval 2638–2756 (PMGFSYDTRC…VTESAGVNED (119 aa)). The Mg(2+) site is built by D2644, D2742, and D2743. The chain crosses the membrane as a helical span at residues 2995–3015 (FLLLCLLLLSVGVGIFLLPAR).

Belongs to the hepacivirus polyprotein family. Homooligomer. Interacts with E1 (via C-terminus). Interacts with the non-structural protein 5A. Interacts (via N-terminus) with host STAT1 (via SH2 domain); this interaction results in decreased STAT1 phosphorylation and ubiquitin-mediated proteasome-dependent STAT1 degradation, leading to decreased IFN-stimulated gene transcription. Interacts with host STAT3; this interaction constitutively activates STAT3. Interacts with host LTBR receptor. Interacts with host TNFRSF1A receptor and possibly induces apoptosis. Interacts with host HNRPK. Interacts with host YWHAE. Interacts with host UBE3A/E6AP. Interacts with host DDX3X. Interacts with host APOA2. Interacts with host RXRA protein. Interacts with host SP110 isoform 3/Sp110b; this interaction sequesters the transcriptional corepressor SP110 away from the nucleus. Interacts with host CREB3 nuclear transcription protein; this interaction triggers cell transformation. Interacts with host ACY3. Interacts with host C1QR1. Interacts with host RBM24; this interaction, which enhances the interaction of the mature core protein with 5'-UTR, may inhibit viral translation and favor replication. Interacts with host EIF2AK2/PKR; this interaction induces the autophosphorylation of EIF2AK2. Part of the viral assembly initiation complex composed of NS2, E1, E2, NS3, NS4A, NS5A and the mature core protein. In terms of assembly, forms a heterodimer with envelope glycoprotein E2. Interacts with mature core protein. Interacts with protease NS2. The heterodimer E1/E2 interacts with host CLDN1; this interaction plays a role in viral entry into host cell. Interacts with host SPSB2 (via C-terminus). Part of the viral assembly initiation complex composed of NS2, E1, E2, NS3, NS4A, NS5A and the mature core protein. Interacts with host NEURL3; this interaction prevents E1 binding to glycoprotein E2. As to quaternary structure, forms a heterodimer with envelope glycoprotein E1. Interacts with host CD81 and SCARB1 receptors; these interactions play a role in viral entry into host cell. Interacts with host EIF2AK2/PKR; this interaction inhibits EIF2AK2 and probably allows the virus to evade the innate immune response. Interacts with host CD209/DC-SIGN and CLEC4M/DC-SIGNR. Interact with host SPCS1; this interaction is essential for viral particle assembly. Interacts with protease NS2. The heterodimer E1/E2 interacts with host CLDN1; this interaction plays a role in viral entry into host cell. Part of the viral assembly initiation complex composed of NS2, E1, E2, NS3, NS4A, NS5A and the mature core protein. Interacts with host SLC3A2/4F2hc; the interaction may facilitate viral entry into host cell. Interacts with human PLSCR1. Homohexamer. Homoheptamer. Interacts with protease NS2. In terms of assembly, homodimer. Interacts with host SPCS1; this interaction is essential for viral particle assembly. Interacts with envelope glycoprotein E1. Interacts with envelope glycoprotein E2. Interacts with viroporin p7. Interacts with serine protease/helicase NS3. Part of the replication complex composed of NS2, NS3, NS4A, NS4B, NS5A and the RNA-directed RNA polymerase embedded in an ER-derived membranous web. Part of the viral assembly initiation complex composed of NS2, E1, E2, NS3, NS4A, NS5A and the mature core protein. As to quaternary structure, interacts with protease NS2. Interacts with non-structural protein 4A; this interaction stabilizes the folding of NS3 serine protease. NS3-NS4A interaction is essential for NS3 activation and allows membrane anchorage of the latter. NS3/NS4A complex also prevents phosphorylation of host IRF3, thus preventing the establishment of dsRNA induced antiviral state. Interacts with host MAVS; this interaction leads to the cleavage and inhibition of host MAVS. Interacts with host TICAM1; this interaction leads to the cleavage and inhibition of host TICAM1. Interacts with host TANK-binding kinase/TBK1; this interaction results in the inhibition of the association between TBK1 and IRF3, which leads to the inhibition of IRF3 activation. Interacts with host RBM24. Part of the replication complex composed of NS2, NS3, NS4A, NS4B, NS5A and the RNA-directed RNA polymerase embedded in an ER-derived membranous web. Part of the viral assembly initiation complex composed of NS2, E1, E2, NS3, NS4A, NS5A and the mature core protein. Interacts with NS3 serine protease; this interaction stabilizes the folding of NS3 serine protease. NS3-NS4A interaction is essential for NS3 activation and allows membrane anchorage of the latter. Interacts with non-structural protein 5A (via N-terminus). Part of the replication complex composed of NS2, NS3, NS4A, NS4B, NS5A and the RNA-directed RNA polymerase embedded in an ER-derived membranous web. Part of the viral assembly initiation complex composed of NS2, E1, E2, NS3, NS4A, NS5A and the mature core protein. In terms of assembly, homomultimer. Interacts with non-structural protein NS5A. Interacts with host PLA2G4C; this interaction likely initiates the recruitment of replication complexes to lipid droplets. Interacts with host STING; this interaction disrupts the interaction between STING and TBK1 thereby suppressing the interferon signaling. Part of the replication complex composed of NS2, NS3, NS4A, NS4B, NS5A and the RNA-directed RNA polymerase embedded in an ER-derived membranous web. As to quaternary structure, monomer. Homodimer; dimerization is required for RNA-binding. Interacts with the mature core protein. Interacts (via N-terminus) with non-structural protein 4A. Interacts with non-structural protein 4B. Interacts (via region D2) with RNA-directed RNA polymerase. Part of the viral assembly initiation complex composed of NS2, E1, E2, NS3, NS4A, NS5A and the mature core protein. Part of the replication complex composed of NS2, NS3, NS4A, NS4B, NS5A and the RNA-directed RNA polymerase embedded in an ER-derived membranous web. Interacts with host GRB2. Interacts with host BIN1. Interacts with host PIK3R1. Interacts with host SRCAP. Interacts with host FKBP8. Interacts (via C-terminus) with host VAPB (via MSP domain). Interacts with host EIF2AK2/PKR; this interaction leads to disruption of EIF2AK2 dimerization by NS5A and probably allows the virus to evade the innate immune response. Interacts (via N-terminus) with host PACSIN2 (via N-terminus); this interaction attenuates protein kinase C alpha-mediated phosphorylation of PACSIN2 by disrupting the interaction between PACSIN2 and PRKCA. Interacts (via N-terminus) with host SRC kinase (via SH2 domain). Interacts with most Src-family kinases. Interacts with host IFI27 and SKP2; promotes the ubiquitin-mediated proteasomal degradation of NS5A. Interacts with host GPS2. Interacts with host TNFRSF21; this interaction allows the modulation by the virus of JNK, p38 MAPK, STAT3, and Akt signaling pathways in a DR6-dependent manner. Interacts (via N-terminus) with host CIDEB (via N-terminus); this interaction seems to regulate the association of HCV particles with APOE. Interacts with host CHKA/Choline Kinase-alpha; CHKA bridges host PI4KA and NS5A and potentiates NS5A-stimulated PI4KA activity, which then facilitates the targeting of the ternary complex to the ER for viral replication. Interacts with host SPSB2 (via C-terminus); this interaction targets NS5A for ubiquitination and degradation. Interacts with host RAB18; this interaction may promote the association of NS5A and other replicase components with lipid droplets. Interacts (via region D2) with host PPIA/CYPA; the interaction stimulates RNA-binding ability of NS5A and is dependent on the peptidyl-prolyl cis-trans isomerase activity of PPIA/CYPA. Interacts with host TRIM14; this interaction induces the degradation of NS5A. Homooligomer. Interacts with non-structural protein 5A. Interacts with host VAPB. Interacts with host PRK2/PKN2. Interacts with host HNRNPA1 and SEPT6; these interactions facilitate viral replication. Part of the replication complex composed of NS2, NS3, NS4A, NS4B, NS5A and the RNA-directed RNA polymerase. The cofactor is Zn(2+). Mg(2+) is required as a cofactor. In terms of processing, specific enzymatic cleavages in vivo yield mature proteins. The structural proteins, core, E1, E2 and p7 are produced by proteolytic processing by host signal peptidases. The core protein precursor is synthesized as a 23 kDa, which is retained in the ER membrane through the hydrophobic signal peptide. Cleavage by the signal peptidase releases the 21 kDa mature core protein. The cleavage of the core protein precursor occurs between aminoacids 176 and 188 but the exact cleavage site is not known. Some degraded forms of the core protein appear as well during the course of infection. The other proteins (p7, NS2, NS3, NS4A, NS4B, NS5A and NS5B) are cleaved by the viral proteases. Autoprocessing between NS2 and NS3 is mediated by the NS2 cysteine protease catalytic domain and regulated by the NS3 N-terminal domain. Post-translationally, phosphorylated by host PKC and PKA. Ubiquitinated; mediated by UBE3A and leading to core protein subsequent proteasomal degradation. In terms of processing, highly N-glycosylated. Post-translationally, palmitoylation is required for NS2/3 autoprocessing and E2 recruitment to membranes. Palmitoylated. This modification may play a role in its polymerization or in protein-protein interactions. In terms of processing, phosphorylated on serines in a basal form termed p56. p58 is a hyperphosphorylated form of p56. p56 and p58 coexist in the cell in roughly equivalent amounts. Hyperphosphorylation is dependent on the presence of NS4A. Host CSNK1A1/CKI-alpha or RPS6KB1 kinases may be responsible for NS5A phosphorylation. Post-translationally, tyrosine phosphorylation is essential for the interaction with host SRC. Ubiquitinated. Ubiquitination, most probably at Lys-2352, mediated by host IFI27 and SKP2 leads to proteasomal degradation, restricting viral infection. Ubiquitination by host TRIM22 leads to interruption of viral replication. In terms of processing, the N-terminus is phosphorylated by host PRK2/PKN2.

It is found in the host endoplasmic reticulum membrane. It localises to the host mitochondrion membrane. Its subcellular location is the virion. The protein localises to the host cytoplasm. The protein resides in the host nucleus. It is found in the host lipid droplet. It localises to the virion membrane. Its subcellular location is the host mitochondrion. The protein localises to the host cell membrane. The protein resides in the host perinuclear region. It catalyses the reaction Hydrolysis of four peptide bonds in the viral precursor polyprotein, commonly with Asp or Glu in the P6 position, Cys or Thr in P1 and Ser or Ala in P1'.. It carries out the reaction a ribonucleoside 5'-triphosphate + H2O = a ribonucleoside 5'-diphosphate + phosphate + H(+). The enzyme catalyses ATP + H2O = ADP + phosphate + H(+). The catalysed reaction is RNA(n) + a ribonucleoside 5'-triphosphate = RNA(n+1) + diphosphate. Its activity is regulated as follows. Inhibited by the antiviral drug hexamethylene amiloride. Inhibition by amantadine appears to be genotype-dependent. Also inhibited by long-alkyl-chain iminosugar derivatives. Activity is up-regulated by PRK2/PKN2-mediated phosphorylation. Its function is as follows. Packages viral RNA to form a viral nucleocapsid, and promotes virion budding. Participates in the viral particle production as a result of its interaction with the non-structural protein 5A. Binds RNA and may function as a RNA chaperone to induce the RNA structural rearrangements taking place during virus replication. Modulates viral translation initiation by interacting with viral IRES and 40S ribosomal subunit. Affects various cell signaling pathways, host immunity and lipid metabolism. Prevents the establishment of cellular antiviral state by blocking the interferon-alpha/beta (IFN-alpha/beta) and IFN-gamma signaling pathways and by blocking the formation of phosphorylated STAT1 and promoting ubiquitin-mediated proteasome-dependent degradation of STAT1. Activates STAT3 leading to cellular transformation. Regulates the activity of cellular genes, including c-myc and c-fos. May repress the promoter of p53, and sequester CREB3 and SP110 isoform 3/Sp110b in the cytoplasm. Represses cell cycle negative regulating factor CDKN1A, thereby interrupting an important check point of normal cell cycle regulation. Targets transcription factors involved in the regulation of inflammatory responses and in the immune response: suppresses TNF-induced NF-kappa-B activation, and activates AP-1. Binds to dendritic cells (DCs) via C1QR1, resulting in down-regulation of T-lymphocytes proliferation. Alters lipid metabolism by interacting with hepatocellular proteins involved in lipid accumulation and storage. Induces up-regulation of FAS promoter activity, and thereby contributes to the increased triglyceride accumulation in hepatocytes (steatosis). Forms a heterodimer with envelope glycoprotein E2, which mediates virus attachment to the host cell, virion internalization through clathrin-dependent endocytosis and fusion with host membrane. Fusion with the host cell is most likely mediated by both E1 and E2, through conformational rearrangements of the heterodimer required for fusion rather than a classical class II fusion mechanism. E1/E2 heterodimer binds host apolipoproteins such as APOB and ApoE thereby forming a lipo-viro-particle (LVP). APOE associated to the LVP allows the initial virus attachment to cell surface receptors such as the heparan sulfate proteoglycans (HSPGs), syndecan-1 (SDC1), syndecan-1 (SDC2), the low-density lipoprotein receptor (LDLR) and scavenger receptor class B type I (SCARB1). The cholesterol transfer activity of SCARB1 allows E2 exposure and binding of E2 to SCARB1 and the tetraspanin CD81. E1/E2 heterodimer binding on CD81 activates the epithelial growth factor receptor (EGFR) signaling pathway. Diffusion of the complex E1-E2-EGFR-SCARB1-CD81 to the cell lateral membrane allows further interaction with Claudin 1 (CLDN1) and occludin (OCLN) to finally trigger HCV entry. Functionally, forms a heterodimer with envelope glycoprotein E1, which mediates virus attachment to the host cell, virion internalization through clathrin-dependent endocytosis and fusion with host membrane. Fusion with the host cell is most likely mediated by both E1 and E2, through conformational rearrangements of the heterodimer required for fusion rather than a classical class II fusion mechanism. The interaction between envelope glycoprotein E2 and host apolipoprotein E/APOE allows the proper assembly, maturation and infectivity of the viral particles. This interaction is probably promoted via the up-regulation of cellular autophagy by the virus. E1/E2 heterodimer binds host apolipoproteins such as APOB and APOE thereby forming a lipo-viro-particle (LVP). APOE associated to the LVP allows the initial virus attachment to cell surface receptors such as the heparan sulfate proteoglycans (HSPGs), syndecan-1 (SDC1), syndecan-1 (SDC2), the low-density lipoprotein receptor (LDLR) and scavenger receptor class B type I (SCARB1). The cholesterol transfer activity of SCARB1 allows E2 exposure and binding of E2 to SCARB1 and the tetraspanin CD81. E1/E2 heterodimer binding on CD81 activates the epithelial growth factor receptor (EGFR) signaling pathway. Diffusion of the complex E1-E2-EGFR-SCARB1-CD81 to the cell lateral membrane allows further interaction with Claudin 1 (CLDN1) and occludin (OCLN) to finally trigger HCV entry. Inhibits host EIF2AK2/PKR activation, preventing the establishment of an antiviral state. Viral ligand for CD209/DC-SIGN and CLEC4M/DC-SIGNR, which are respectively found on dendritic cells (DCs), and on liver sinusoidal endothelial cells and macrophage-like cells of lymph node sinuses. These interactions allow the capture of circulating HCV particles by these cells and subsequent facilitated transmission to permissive cells such as hepatocytes and lymphocyte subpopulations. The interaction between E2 and host amino acid transporter complex formed by SLC3A2 and SLC7A5/LAT1 may facilitate viral entry into host cell. In terms of biological role, ion channel protein that acts as a viroporin and plays an essential role in the assembly, envelopment and secretion of viral particles. Regulates the host cell secretory pathway, which induces the intracellular retention of viral glycoproteins and favors assembly of viral particles. Creates a pore in acidic organelles and releases Ca(2+) and H(+) in the cytoplasm of infected cells, leading to a productive viral infection. High levels of cytoplasmic Ca(2+) may trigger membrane trafficking and transport of viral ER-associated proteins to viroplasms, sites of viral genome replication. This ionic imbalance induces the assembly of the inflammasome complex, which triggers the maturation of pro-IL-1beta into IL-1beta through the action of caspase-1. Targets also host mitochondria and induces mitochondrial depolarization. In addition of its role as a viroporin, acts as a lipid raft adhesion factor. Its function is as follows. Cysteine protease required for the proteolytic auto-cleavage between the non-structural proteins NS2 and NS3. The N-terminus of NS3 is required for the function of NS2 protease (active region NS2-3). Promotes the initiation of viral particle assembly by mediating the interaction between structural and non-structural proteins. Displays three enzymatic activities: serine protease with a chymotrypsin-like fold, NTPase and RNA helicase. NS3 serine protease, in association with NS4A, is responsible for the cleavages of NS3-NS4A, NS4A-NS4B, NS4B-NS5A and NS5A-NS5B. The NS3/NS4A complex prevents phosphorylation of host IRF3, thus preventing the establishment of dsRNA induced antiviral state. The NS3/NS4A complex induces host amino acid transporter component SLC3A2, thus contributing to HCV propagation. NS3 RNA helicase binds to RNA and unwinds both dsDNA and dsRNA in the 3' to 5' direction, and likely resolves RNA complicated stable secondary structures in the template strand. Binds a single ATP and catalyzes the unzipping of a single base pair of dsRNA. Inhibits host antiviral proteins TBK1 and IRF3 thereby preventing the establishment of an antiviral state. Cleaves host MAVS/CARDIF thereby preventing the establishment of an antiviral state. Cleaves host TICAM1/TRIF, thereby disrupting TLR3 signaling and preventing the establishment of an antiviral state. Functionally, peptide cofactor which forms a non-covalent complex with the N-terminal of NS3 serine protease. The NS3/NS4A complex prevents phosphorylation of host IRF3, thus preventing the establishment of dsRNA induced antiviral state. The NS3/NS4A complex induces host amino acid transporter component SLC3A2, thus contributing to HCV propagation. In terms of biological role, induces a specific membrane alteration that serves as a scaffold for the virus replication complex. This membrane alteration gives rise to the so-called ER-derived membranous web that contains the replication complex. NS4B self-interaction contributes to its function in membranous web formation. Promotes host TRIF protein degradation in a CASP8-dependent manner thereby inhibiting host TLR3-mediated interferon signaling. Disrupts the interaction between STING and TBK1 contributing to the inhibition of interferon signaling. Its function is as follows. Phosphorylated protein that is indispensable for viral replication and assembly. Both hypo- and hyperphosphorylated states are required for the viral life cycle. The hyperphosphorylated form of NS5A is an inhibitor of viral replication. Involved in RNA-binding and especially in binding to the viral genome. Zinc is essential for RNA-binding. Participates in the viral particle production as a result of its interaction with the mature viral core protein. Its interaction with host VAPB may target the viral replication complex to vesicles. Down-regulates viral IRES translation initiation. Mediates interferon resistance, presumably by interacting with and inhibiting host EIF2AK2/PKR. Prevents BIN1-induced apoptosis. Acts as a transcriptional activator of some host genes important for viral replication when localized in the nucleus. Via the interaction with host PACSIN2, modulates lipid droplet formation in order to promote virion assembly. Modulates TNFRSF21/DR6 signaling pathway for viral propagation. RNA-dependent RNA polymerase that performs primer-template recognition and RNA synthesis during viral replication. Initiates RNA transcription/replication at a flavin adenine dinucleotide (FAD), resulting in a 5'- FAD cap on viral RNAs. In this way, recognition of viral 5' RNA by host pattern recognition receptors can be bypassed, thereby evading activation of antiviral pathways. In Hepatitis C virus genotype 6h (isolate VN004) (HCV), this protein is Genome polyprotein.